Here is a 551-residue protein sequence, read N- to C-terminus: MHCERFICILRIIGTTLFGVSLLLGISAAYIVGYQFIQTDNYYFSFGLYGAILALHLIIQSLFAFLEHRKMKRSLETPIKLNKSVALCIAAYQEDEDYLRKCLLSVKRLTYPGMKVIMVIDGNSDDDLYMMNIFREIMGNDSCATYVWKNNFHMKGPNETDETHRESMQHVTQMVLSNRNVCIMQKWNGKREVMYTAFKALGRSVDYVQVCDSDTVLDPASSVEMVKVLEEDIMVGGVGGDVQILNKYDSWISFLSSVRYWMAFNIERACQSYFGCVQCISGPLGMYRNSLLHEFIEDWYNQEFLGSQCSFGDDRHLTNRVLSLGYATKYTARSKCLTETPTEYLRWLNQQTRWSKSYFREWLYNSLWFHKHHLWMTYEAVITGFFPFFLIATVIQLFYRGRIWNILLFLLTVQLVGLIKSSFASALRGNIVMVFMSFYSVLYMSSLLPAKMFAIATINKAGWGTSGRKTIVVNFIGLIPITVWFTILLGGVCYTIWRETKKPFSESEKIVLAVGAILYACYWVMLLTMYVSLVMKCGRRRKEPQHDLVLA.

At 1–11 (MHCERFICILR) the chain is on the cytoplasmic side. A helical transmembrane segment spans residues 12-32 (IIGTTLFGVSLLLGISAAYIV). Over 33-45 (GYQFIQTDNYYFS) the chain is Extracellular. Residues 46–66 (FGLYGAILALHLIIQSLFAFL) form a helical membrane-spanning segment. Topologically, residues 67 to 374 (EHRKMKRSLE…NSLWFHKHHL (308 aa)) are cytoplasmic. The helical transmembrane segment at 375-395 (WMTYEAVITGFFPFFLIATVI) threads the bilayer. Residues 396 to 402 (QLFYRGR) lie on the Extracellular side of the membrane. The chain crosses the membrane as a helical span at residues 403 to 423 (IWNILLFLLTVQLVGLIKSSF). Topologically, residues 424 to 429 (ASALRG) are cytoplasmic. The chain crosses the membrane as a helical span at residues 430–450 (NIVMVFMSFYSVLYMSSLLPA). At 451 to 470 (KMFAIATINKAGWGTSGRKT) the chain is on the extracellular side. A helical membrane pass occupies residues 471-491 (IVVNFIGLIPITVWFTILLGG). Topologically, residues 492–509 (VCYTIWRETKKPFSESEK) are cytoplasmic. The helical transmembrane segment at 510-530 (IVLAVGAILYACYWVMLLTMY) threads the bilayer. Topologically, residues 531 to 551 (VSLVMKCGRRRKEPQHDLVLA) are extracellular.

The protein belongs to the NodC/HAS family. As to quaternary structure, homodimer; dimerization promotes enzymatic activity. It depends on Mg(2+) as a cofactor.

The protein localises to the cell membrane. It localises to the endoplasmic reticulum membrane. Its subcellular location is the vesicle. It is found in the golgi apparatus membrane. The protein resides in the lysosome. The enzyme catalyses [hyaluronan](n) + UDP-N-acetyl-alpha-D-glucosamine = N-acetyl-beta-D-glucosaminyl-(1-&gt;4)-[hyaluronan](n) + UDP + H(+). It catalyses the reaction N-acetyl-beta-D-glucosaminyl-(1-&gt;4)-[hyaluronan](n) + UDP-alpha-D-glucuronate = [hyaluronan](n+1) + UDP + H(+). The protein operates within glycan biosynthesis; hyaluronan biosynthesis. In terms of biological role, catalyzes the addition of GlcNAc or GlcUA monosaccharides to the nascent hyaluronan polymer. Therefore, it is essential to hyaluronan synthesis a major component of most extracellular matrices that has a structural role in tissues architectures and regulates cell adhesion, migration and differentiation. This is one of three isoenzymes responsible for cellular hyaluronan synthesis and it is particularly responsible for the synthesis of high molecular mass hyaluronan. This chain is Hyaluronan synthase 2 (has2), found in Xenopus laevis (African clawed frog).